An 82-amino-acid polypeptide reads, in one-letter code: Musculoskeletal embryonic nuclear protein 1 (82 aa).

Disordered regions lie at residues 1–33 and 49–82; these read MSQA…LTKN and QAGS…SVFG. Ser-2 carries the phosphoserine modification. The Nuclear localization signal signature appears at 10–18; that stretch reads PIKKKRPPV.

This sequence belongs to the MUSTN1 family. Expression in skeletal muscle is reduced during limb unloading but increases during the active recovery phase that follows.

It is found in the nucleus. The protein resides in the cytoplasm. The protein localises to the secreted. It localises to the extracellular space. In terms of biological role, required for chondrocyte development and proliferation. Plays a role in myoblast differentiation and fusion. Modulates skeletal muscle extracellular matrix composition. Plays a role in skeletal muscle function. Plays a role in glucose homeostasis. This Homo sapiens (Human) protein is Musculoskeletal embryonic nuclear protein 1 (MUSTN1).